The chain runs to 465 residues: Putative F-box protein At1g21990 (465 aa).

In terms of domain architecture, F-box spans 8–54 (RDLISGSPDEILGKILSFLPTHHAATTSVLSKRWRNLLPLVDKLELT).

This Arabidopsis thaliana (Mouse-ear cress) protein is Putative F-box protein At1g21990.